Consider the following 276-residue polypeptide: Formamidopyrimidine-DNA glycosylase (276 aa).

Pro2 (schiff-base intermediate with DNA) is an active-site residue. Catalysis depends on Glu3, which acts as the Proton donor. Lys60 serves as the catalytic Proton donor; for beta-elimination activity. Residues His93 and Arg112 each coordinate DNA. The FPG-type zinc-finger motif lies at 240-274 (NVYGKKGEPCVTCGTILEKTVVGGRGTHYCPICQP). The active-site Proton donor; for delta-elimination activity is the Arg264.

The protein belongs to the FPG family. Monomer. Zn(2+) is required as a cofactor.

The enzyme catalyses Hydrolysis of DNA containing ring-opened 7-methylguanine residues, releasing 2,6-diamino-4-hydroxy-5-(N-methyl)formamidopyrimidine.. It carries out the reaction 2'-deoxyribonucleotide-(2'-deoxyribose 5'-phosphate)-2'-deoxyribonucleotide-DNA = a 3'-end 2'-deoxyribonucleotide-(2,3-dehydro-2,3-deoxyribose 5'-phosphate)-DNA + a 5'-end 5'-phospho-2'-deoxyribonucleoside-DNA + H(+). Involved in base excision repair of DNA damaged by oxidation or by mutagenic agents. Acts as a DNA glycosylase that recognizes and removes damaged bases. Has a preference for oxidized purines, such as 7,8-dihydro-8-oxoguanine (8-oxoG). Has AP (apurinic/apyrimidinic) lyase activity and introduces nicks in the DNA strand. Cleaves the DNA backbone by beta-delta elimination to generate a single-strand break at the site of the removed base with both 3'- and 5'-phosphates. In Bacillus cereus (strain ATCC 14579 / DSM 31 / CCUG 7414 / JCM 2152 / NBRC 15305 / NCIMB 9373 / NCTC 2599 / NRRL B-3711), this protein is Formamidopyrimidine-DNA glycosylase.